A 553-amino-acid chain; its full sequence is Probable malate:quinone oxidoreductase (553 aa).

The disordered stretch occupies residues proline 524–leucine 553.

It belongs to the MQO family. FAD is required as a cofactor.

The catalysed reaction is (S)-malate + a quinone = a quinol + oxaloacetate. Its pathway is carbohydrate metabolism; tricarboxylic acid cycle; oxaloacetate from (S)-malate (quinone route): step 1/1. The chain is Probable malate:quinone oxidoreductase from Burkholderia cenocepacia (strain HI2424).